The chain runs to 509 residues: Monocarboxylate transporter 9 (509 aa).

Residues 1-12 (MELKKSPDGGWG) lie on the Cytoplasmic side of the membrane. 12 helical membrane-spanning segments follow: residues 13–33 (WVIV…PLAV), 53–73 (WVGS…SLCV), 80–100 (PVTI…SFAP), 102–122 (IYFL…LLYT), 137–157 (GLAL…YAAL), 164–184 (FYGL…ILAC), 305–325 (VFSA…PPSL), 342–362 (IMPL…LLGI), 372–392 (LYLY…IPFA), 398–418 (LALL…FPYV), 433–453 (GILM…VGWF), and 462–482 (IAFY…LLAA). The Cytoplasmic portion of the chain corresponds to 483-509 (LPSWDTCNKQLPKPAPTTFLYKVASNV).

Belongs to the major facilitator superfamily. Monocarboxylate porter (TC 2.A.1.13) family.

It localises to the cell membrane. The enzyme catalyses creatine(in) = creatine(out). It catalyses the reaction (R)-carnitine(in) = (R)-carnitine(out). In terms of biological role, extracellular pH-and Na(+)-sensitive low-affinity creatine transporter. Also functions as a pH-independent carnitine efflux transporter. The polypeptide is Monocarboxylate transporter 9 (SLC16A9) (Pongo abelii (Sumatran orangutan)).